The following is a 250-amino-acid chain: Small ribosomal subunit protein uS2 (250 aa).

Belongs to the universal ribosomal protein uS2 family.

The protein is Small ribosomal subunit protein uS2 of Acidovorax ebreus (strain TPSY) (Diaphorobacter sp. (strain TPSY)).